We begin with the raw amino-acid sequence, 537 residues long: Protein swallow (537 aa).

The tract at residues 344–406 (QPNAGKPKKN…SESSHPSSND (63 aa)) is disordered. Low complexity-rich tracts occupy residues 371 to 383 (NGNG…HSSS) and 392 to 406 (AAPN…SSND).

In terms of assembly, may be constituted of a homo- or heterodimer.

It is found in the nucleus. Its function is as follows. Has a role in localizing bicoid mRNA at the anterior margin of the oocyte during oogenesis, and a poorly characterized role in nuclear divisions in early embryogenesis. This chain is Protein swallow (swa), found in Drosophila pseudoobscura pseudoobscura (Fruit fly).